Here is a 160-residue protein sequence, read N- to C-terminus: SsrA-binding protein (160 aa).

It belongs to the SmpB family.

The protein resides in the cytoplasm. Its function is as follows. Required for rescue of stalled ribosomes mediated by trans-translation. Binds to transfer-messenger RNA (tmRNA), required for stable association of tmRNA with ribosomes. tmRNA and SmpB together mimic tRNA shape, replacing the anticodon stem-loop with SmpB. tmRNA is encoded by the ssrA gene; the 2 termini fold to resemble tRNA(Ala) and it encodes a 'tag peptide', a short internal open reading frame. During trans-translation Ala-aminoacylated tmRNA acts like a tRNA, entering the A-site of stalled ribosomes, displacing the stalled mRNA. The ribosome then switches to translate the ORF on the tmRNA; the nascent peptide is terminated with the 'tag peptide' encoded by the tmRNA and targeted for degradation. The ribosome is freed to recommence translation, which seems to be the essential function of trans-translation. The chain is SsrA-binding protein from Yersinia pseudotuberculosis serotype O:1b (strain IP 31758).